The chain runs to 265 residues: Thiazole synthase (265 aa).

The active-site Schiff-base intermediate with DXP is Lys-106. 1-deoxy-D-xylulose 5-phosphate-binding positions include Gly-167, 193-194 (AG), and 215-216 (NS).

The protein belongs to the ThiG family. Homotetramer. Forms heterodimers with either ThiH or ThiS.

It localises to the cytoplasm. It carries out the reaction [ThiS sulfur-carrier protein]-C-terminal-Gly-aminoethanethioate + 2-iminoacetate + 1-deoxy-D-xylulose 5-phosphate = [ThiS sulfur-carrier protein]-C-terminal Gly-Gly + 2-[(2R,5Z)-2-carboxy-4-methylthiazol-5(2H)-ylidene]ethyl phosphate + 2 H2O + H(+). Its pathway is cofactor biosynthesis; thiamine diphosphate biosynthesis. Functionally, catalyzes the rearrangement of 1-deoxy-D-xylulose 5-phosphate (DXP) to produce the thiazole phosphate moiety of thiamine. Sulfur is provided by the thiocarboxylate moiety of the carrier protein ThiS. In vitro, sulfur can be provided by H(2)S. The polypeptide is Thiazole synthase (Prochlorococcus marinus subsp. pastoris (strain CCMP1986 / NIES-2087 / MED4)).